Consider the following 180-residue polypeptide: Crossover junction endodeoxyribonuclease RuvC (180 aa).

Residues Asp-7, Glu-66, and Asp-138 contribute to the active site. Positions 7, 66, and 138 each coordinate Mg(2+).

Belongs to the RuvC family. Homodimer which binds Holliday junction (HJ) DNA. The HJ becomes 2-fold symmetrical on binding to RuvC with unstacked arms; it has a different conformation from HJ DNA in complex with RuvA. In the full resolvosome a probable DNA-RuvA(4)-RuvB(12)-RuvC(2) complex forms which resolves the HJ. Mg(2+) is required as a cofactor.

Its subcellular location is the cytoplasm. It carries out the reaction Endonucleolytic cleavage at a junction such as a reciprocal single-stranded crossover between two homologous DNA duplexes (Holliday junction).. In terms of biological role, the RuvA-RuvB-RuvC complex processes Holliday junction (HJ) DNA during genetic recombination and DNA repair. Endonuclease that resolves HJ intermediates. Cleaves cruciform DNA by making single-stranded nicks across the HJ at symmetrical positions within the homologous arms, yielding a 5'-phosphate and a 3'-hydroxyl group; requires a central core of homology in the junction. The consensus cleavage sequence is 5'-(A/T)TT(C/G)-3'. Cleavage occurs on the 3'-side of the TT dinucleotide at the point of strand exchange. HJ branch migration catalyzed by RuvA-RuvB allows RuvC to scan DNA until it finds its consensus sequence, where it cleaves and resolves the cruciform DNA. The sequence is that of Crossover junction endodeoxyribonuclease RuvC from Paraburkholderia xenovorans (strain LB400).